A 664-amino-acid polypeptide reads, in one-letter code: 26S rRNA (cytosine-C(5))-methyltransferase nsun-1 (664 aa).

A disordered region spans residues Met1 to Pro105. Over residues Pro38–Lys52 the composition is skewed to basic residues. Residues Lys53–Leu68 are compositionally biased toward basic and acidic residues. Positions Ser84–Asp99 are enriched in acidic residues. Residues Cys313 to Lys319, Asp337, and Asp382 each bind S-adenosyl-L-methionine. Cys439 functions as the Nucleophile in the catalytic mechanism. Residues Lys513–Gln664 are disordered. The segment covering Val519–Ala528 has biased composition (basic and acidic residues). Acidic residues predominate over residues Glu541–Glu550. The span at Lys563 to Lys572 shows a compositional bias: basic residues. Basic and acidic residues predominate over residues Lys606 to Asp618. Composition is skewed to basic residues over residues Lys627–Ala644 and Val652–Gln664.

The protein belongs to the class I-like SAM-binding methyltransferase superfamily. RsmB/NOP family.

The protein localises to the nucleus. The protein resides in the nucleolus. It catalyses the reaction a cytidine in 26S rRNA + S-adenosyl-L-methionine = a 5-methylcytidine in 26S rRNA + S-adenosyl-L-homocysteine + H(+). Its function is as follows. Methyltransferase which methylates the carbon-5 position of cytosine 2982 to 5-methylcytosine (m5C2982) in 26S rRNA. May play a role in the translation of leucine and proline codons. May be required for the translation of specific mRNAs such as mRNAs involved in gonad development, collagen production and cuticle integrity. Plays a role in ensuring the correct localization of the germline-specific protein gld-1 during development. Not required for pre-rRNA processing, the production of mature 5S, 5.8S, 18S or 26S rRNAs or global translation. Plays a role in positively regulating fertility. In Caenorhabditis elegans, this protein is 26S rRNA (cytosine-C(5))-methyltransferase nsun-1.